Consider the following 417-residue polypeptide: UDP-N-acetylmuramoylalanine--D-glutamate ligase (417 aa).

101–107 serves as a coordination point for ATP; the sequence is GTAGKTS.

Belongs to the MurCDEF family.

Its subcellular location is the cytoplasm. The enzyme catalyses UDP-N-acetyl-alpha-D-muramoyl-L-alanine + D-glutamate + ATP = UDP-N-acetyl-alpha-D-muramoyl-L-alanyl-D-glutamate + ADP + phosphate + H(+). It functions in the pathway cell wall biogenesis; peptidoglycan biosynthesis. Its function is as follows. Cell wall formation. Catalyzes the addition of glutamate to the nucleotide precursor UDP-N-acetylmuramoyl-L-alanine (UMA). This is UDP-N-acetylmuramoylalanine--D-glutamate ligase from Thermus thermophilus (strain ATCC BAA-163 / DSM 7039 / HB27).